The primary structure comprises 328 residues: NAD(P)H-dependent pentose reductase (328 aa).

Tyr-50 (proton donor) is an active-site residue. Residue His-112 coordinates substrate. NAD(+)-binding positions include 174-175 (AN), 223-232 (SSFGPQSFVE), and 279-289 (KSNNVDRLKQN).

This sequence belongs to the aldo/keto reductase family.

Pentose reductase with a broad substrate affinity involved in pentose catabolism. Has highest reductase activities with L-arabinose and D-xylose as substrates, and displays much lower activities with D-ribose, D-galactose and D-glucose. Has highest dehydrogenase activity with L-arabitol as substrate, followed by xylitol and D-sorbitol. May be responsible for the first step of the L-arabinose catabolic pathway. This Pyricularia oryzae (strain 70-15 / ATCC MYA-4617 / FGSC 8958) (Rice blast fungus) protein is NAD(P)H-dependent pentose reductase (PRD1).